Here is a 155-residue protein sequence, read N- to C-terminus: Putative pre-16S rRNA nuclease (155 aa).

This sequence belongs to the YqgF nuclease family.

It localises to the cytoplasm. Could be a nuclease involved in processing of the 5'-end of pre-16S rRNA. In Xanthomonas campestris pv. campestris (strain B100), this protein is Putative pre-16S rRNA nuclease.